Here is a 251-residue protein sequence, read N- to C-terminus: 5-oxoprolinase subunit A 3 (251 aa).

The protein belongs to the LamB/PxpA family. Forms a complex composed of PxpA, PxpB and PxpC.

The enzyme catalyses 5-oxo-L-proline + ATP + 2 H2O = L-glutamate + ADP + phosphate + H(+). Catalyzes the cleavage of 5-oxoproline to form L-glutamate coupled to the hydrolysis of ATP to ADP and inorganic phosphate. This chain is 5-oxoprolinase subunit A 3, found in Pseudomonas aeruginosa (strain ATCC 15692 / DSM 22644 / CIP 104116 / JCM 14847 / LMG 12228 / 1C / PRS 101 / PAO1).